A 606-amino-acid chain; its full sequence is MTTQAPPTSLLPLSPEQLARLQAAVGEFSPTQMAWLSGYFWGMVNQQPGAVASPAVAAPPPVTVTLISASQTGNARRLAEQLRDDLLAAQLSVNLVNAGDYKFKQIAQERLLVVVASTQGEGEPAEEAVALHKFLFSKKAPKLSETAFAVFGLGDTSYEHFCQAGKDFDSKLAELGAQRLLDRVDADVEYQVQAQQWRQQVVATLQAKVPAQSTAPTQSTTPAAAAITSGGTTTVSPYSKTAPLTAQLSVQQKVTGRNSEKDVRHIEIDLGDSGLRYQPGDALGVWFDNDPALVEELLALLWLKGDEPVSIDGQNMPLAQALLSHLELTQNTTLIVDKYAALSRDETLIALLADKPALQLYAKNTPFVDMVRQAPSDLNADQLVGLLRPLTPRLYSIASSQAETENEVHITVGVVRYDIDGRARSGGASGYLADRLEVDGDIRVFIEHNDNFRLPANPETPVIMIGPGTGIAPFRAFMQQREVDGASGKNWLFFGNPHFTEDFLYQVEWQRYVKEGVLTRIDLAWSRDQAHKIYVQDKLREQGAELWNWIQQGAHIYVCGDANRMAKDVEQVLLDVVALHGAMDAEQADEYLSELRQARRYQRDVY.

Residues 64-202 (VTLISASQTG…QAQQWRQQVV (139 aa)) form the Flavodoxin-like domain. FMN contacts are provided by residues 70-75 (SQTGNA), 117-120 (STQG), and 153-162 (LGDTSYEHFC). Positions 212 to 234 (QSTAPTQSTTPAAAAITSGGTTT) are enriched in low complexity. The interval 212 to 235 (QSTAPTQSTTPAAAAITSGGTTTV) is disordered. The FAD-binding FR-type domain maps to 241–455 (TAPLTAQLSV…IEHNDNFRLP (215 aa)). Residues threonine 329, lysine 363, 393 to 396 (RLYS), 411 to 413 (TVG), tyrosine 417, and 426 to 429 (GGAS) contribute to the FAD site. Residues 526–527 (SR), 532–536 (KIYVQ), and aspartate 568 contribute to the NADP(+) site. Tyrosine 606 is a binding site for FAD.

This sequence belongs to the NADPH-dependent sulphite reductase flavoprotein subunit CysJ family. It in the N-terminal section; belongs to the flavodoxin family. The protein in the C-terminal section; belongs to the flavoprotein pyridine nucleotide cytochrome reductase family. Alpha(8)-beta(8). The alpha component is a flavoprotein, the beta component is a hemoprotein. It depends on FAD as a cofactor. FMN serves as cofactor.

The catalysed reaction is hydrogen sulfide + 3 NADP(+) + 3 H2O = sulfite + 3 NADPH + 4 H(+). It functions in the pathway sulfur metabolism; hydrogen sulfide biosynthesis; hydrogen sulfide from sulfite (NADPH route): step 1/1. Component of the sulfite reductase complex that catalyzes the 6-electron reduction of sulfite to sulfide. This is one of several activities required for the biosynthesis of L-cysteine from sulfate. The flavoprotein component catalyzes the electron flow from NADPH -&gt; FAD -&gt; FMN to the hemoprotein component. The protein is Sulfite reductase [NADPH] flavoprotein alpha-component of Yersinia pestis bv. Antiqua (strain Antiqua).